The chain runs to 416 residues: Serine hydroxymethyltransferase (416 aa).

Residues leucine 121 and 125–127 (GHL) each bind (6S)-5,6,7,8-tetrahydrofolate. Lysine 230 carries the N6-(pyridoxal phosphate)lysine modification. (6S)-5,6,7,8-tetrahydrofolate is bound at residue 355–357 (SPF).

The protein belongs to the SHMT family. In terms of assembly, homodimer. Pyridoxal 5'-phosphate is required as a cofactor.

It is found in the cytoplasm. It carries out the reaction (6R)-5,10-methylene-5,6,7,8-tetrahydrofolate + glycine + H2O = (6S)-5,6,7,8-tetrahydrofolate + L-serine. The protein operates within one-carbon metabolism; tetrahydrofolate interconversion. It functions in the pathway amino-acid biosynthesis; glycine biosynthesis; glycine from L-serine: step 1/1. Its function is as follows. Catalyzes the reversible interconversion of serine and glycine with tetrahydrofolate (THF) serving as the one-carbon carrier. This reaction serves as the major source of one-carbon groups required for the biosynthesis of purines, thymidylate, methionine, and other important biomolecules. Also exhibits THF-independent aldolase activity toward beta-hydroxyamino acids, producing glycine and aldehydes, via a retro-aldol mechanism. The polypeptide is Serine hydroxymethyltransferase (Streptococcus thermophilus (strain CNRZ 1066)).